The primary structure comprises 655 residues: Tumor necrosis factor receptor superfamily member 21 (655 aa).

A signal peptide spans 1–41 (MGTRASSITALASCSRTAGQVGATMVAGSLLLLGFLSTITA). Residues 42-349 (QPEQKTLSLP…AHKHFDINEH (308 aa)) are Extracellular-facing. 4 TNFR-Cys repeats span residues 50-88 (LPGT…LRVC), 90-131 (SCPA…DREC), 133-167 (CPPG…EDVR), and 170-211 (QCAR…DNVC). 9 cysteine pairs are disulfide-bonded: Cys-67/Cys-80, Cys-70/Cys-88, Cys-91/Cys-106, Cys-109/Cys-123, Cys-113/Cys-131, Cys-133/Cys-144, Cys-150/Cys-168, Cys-171/Cys-186, and Cys-192/Cys-211. N-linked (GlcNAc...) asparagine glycosylation is present at Asn-82. The N-linked (GlcNAc...) asparagine glycan is linked to Asn-141. Disordered stretches follow at residues 222–305 (PPSS…QAPH) and 318–339 (EATG…PRQN). Composition is skewed to polar residues over residues 241 to 262 (VPSS…TASV) and 276 to 302 (PDNT…THQQ). Residues Asn-252, Asn-257, Asn-278, and Asn-289 are each glycosylated (N-linked (GlcNAc...) asparagine). Over residues 330–339 (APKRGHPRQN) the composition is skewed to basic residues. A helical transmembrane segment spans residues 350-370 (LPWMIVLFLLLVLVLIVVCSI). A lipid anchor (S-palmitoyl cysteine) is attached at Cys-368. Topologically, residues 371–655 (RKSSRTLKKG…SVYSHLPDLL (285 aa)) are cytoplasmic. The region spanning 415–498 (GIDILKLVAA…DVVEKIRGLM (84 aa)) is the Death domain.

As to quaternary structure, associates with TRADD. Interacts with NGFR. Interacts with CASP8. Oxidized in response to reactive oxygen species (ROS), leading to endocytosis. Detected in spleen B-cells (at protein level). Ubiquitous. Highly expressed in adult spleen, thymus, testis, prostate, ovary, small intestine, colon, brain, lung and kidney, and in fetal brain, liver and lung. Detected at lower levels in adult peripheral blood leukocytes, lung, and in fetal muscle, heart, kidney, small intestine and skin. Detected in T-cells, B-cells and monocytes. In T-cells expression is highest in Th0 cells, intermediate in Th2 cells and lower in Th1 cells. Expressed at low levels in proliferating progenitors in the spinal cord, but is highly expressed by differentiating neurons within the spinal cord and adjacent dorsal root ganglia.

Its subcellular location is the cell membrane. Promotes apoptosis, possibly via a pathway that involves the activation of NF-kappa-B. Can also promote apoptosis mediated by BAX and by the release of cytochrome c from the mitochondria into the cytoplasm. Trophic-factor deprivation triggers the cleavage of surface APP by beta-secretase to release sAPP-beta which is further cleaved to release an N-terminal fragment of APP (N-APP). Negatively regulates oligodendrocyte survival, maturation and myelination. Plays a role in signaling cascades triggered by stimulation of T-cell receptors, in the adaptive immune response and in the regulation of T-cell differentiation and proliferation. Negatively regulates T-cell responses and the release of cytokines such as IL4, IL5, IL10, IL13 and IFNG by Th2 cells. Negatively regulates the production of IgG, IgM and IgM in response to antigens. May inhibit the activation of JNK in response to T-cell stimulation. Also acts as a regulator of pyroptosis: recruits CASP8 in response to reactive oxygen species (ROS) and subsequent oxidation, leading to activation of GSDMC. The polypeptide is Tumor necrosis factor receptor superfamily member 21 (Tnfrsf21) (Mus musculus (Mouse)).